The primary structure comprises 238 residues: Endonuclease V (238 aa).

Residues Asp-46 and Asp-116 each contribute to the Mg(2+) site.

The protein belongs to the endonuclease V family. Mg(2+) is required as a cofactor.

It localises to the cytoplasm. The catalysed reaction is Endonucleolytic cleavage at apurinic or apyrimidinic sites to products with a 5'-phosphate.. Its function is as follows. DNA repair enzyme involved in the repair of deaminated bases. Selectively cleaves double-stranded DNA at the second phosphodiester bond 3' to a deoxyinosine leaving behind the intact lesion on the nicked DNA. This Bacillus subtilis (strain 168) protein is Endonuclease V.